The sequence spans 299 residues: Protease HtpX homolog (299 aa).

2 consecutive transmembrane segments (helical) span residues 15-35 (ILLLVFFLLLALVGYAVGYLF) and 39-59 (GLGGLVIALIIGFIYALSMIF). His143 lines the Zn(2+) pocket. Glu144 is an active-site residue. Zn(2+) is bound at residue His147. A run of 2 helical transmembrane segments spans residues 158–178 (IAVALVSAITMLSGMAGRMMW) and 198–218 (IIMLVVSLLAIVLAPLAATLV). Glu227 lines the Zn(2+) pocket.

The protein belongs to the peptidase M48B family. The cofactor is Zn(2+).

It is found in the cell membrane. The protein is Protease HtpX homolog of Streptococcus pneumoniae (strain Hungary19A-6).